The chain runs to 72 residues: DNA-directed RNA polymerase subunit omega (72 aa).

Belongs to the RNA polymerase subunit omega family. The RNAP catalytic core consists of 2 alpha, 1 beta, 1 beta' and 1 omega subunit. When a sigma factor is associated with the core the holoenzyme is formed, which can initiate transcription.

It carries out the reaction RNA(n) + a ribonucleoside 5'-triphosphate = RNA(n+1) + diphosphate. In terms of biological role, promotes RNA polymerase assembly. Latches the N- and C-terminal regions of the beta' subunit thereby facilitating its interaction with the beta and alpha subunits. The polypeptide is DNA-directed RNA polymerase subunit omega (Clostridium beijerinckii (strain ATCC 51743 / NCIMB 8052) (Clostridium acetobutylicum)).